The primary structure comprises 160 residues: UPF0225 protein PP_1119 (160 aa).

This sequence belongs to the UPF0225 family.

The chain is UPF0225 protein PP_1119 from Pseudomonas putida (strain ATCC 47054 / DSM 6125 / CFBP 8728 / NCIMB 11950 / KT2440).